Here is a 151-residue protein sequence, read N- to C-terminus: UPF0178 protein Swoo_1444 (151 aa).

The protein belongs to the UPF0178 family.

The chain is UPF0178 protein Swoo_1444 from Shewanella woodyi (strain ATCC 51908 / MS32).